A 195-amino-acid polypeptide reads, in one-letter code: Putative kinase protein 143R (195 aa).

8 to 16 (GIIGAGKST) lines the ATP pocket. The substrate site is built by glutamate 31, tyrosine 43, and glutamine 54. The active-site Proton acceptor is glutamate 78. Positions 79 and 142 each coordinate substrate.

It belongs to the DCK/DGK family.

This chain is Putative kinase protein 143R, found in Acheta domesticus (House cricket).